The following is a 231-amino-acid chain: 7-cyano-7-deazaguanine synthase (231 aa).

8-18 contacts ATP; sequence FSGGQDSTTCL. Residues C188, C197, C200, and C203 each coordinate Zn(2+).

It belongs to the QueC family. The cofactor is Zn(2+).

It catalyses the reaction 7-carboxy-7-deazaguanine + NH4(+) + ATP = 7-cyano-7-deazaguanine + ADP + phosphate + H2O + H(+). Its pathway is purine metabolism; 7-cyano-7-deazaguanine biosynthesis. In terms of biological role, catalyzes the ATP-dependent conversion of 7-carboxy-7-deazaguanine (CDG) to 7-cyano-7-deazaguanine (preQ(0)). The polypeptide is 7-cyano-7-deazaguanine synthase (Enterobacter sp. (strain 638)).